We begin with the raw amino-acid sequence, 67 residues long: UPF0434 protein Reut_A0592 (67 aa).

It belongs to the UPF0434 family.

The sequence is that of UPF0434 protein Reut_A0592 from Cupriavidus pinatubonensis (strain JMP 134 / LMG 1197) (Cupriavidus necator (strain JMP 134)).